We begin with the raw amino-acid sequence, 348 residues long: Lysophosphatidic acid receptor 2 (348 aa).

The Extracellular portion of the chain corresponds to 1–30 (MGQCYYNETIGFFYNNSGKELSLHWRPKDV). 2 N-linked (GlcNAc...) asparagine glycosylation sites follow: Asn-7 and Asn-15. A helical transmembrane segment spans residues 31-51 (VVVALGLTVSVLVLLTNLLVI). Over 52-66 (AAIASNRRFHQPIYY) the chain is Cytoplasmic. The chain crosses the membrane as a helical span at residues 67 to 87 (LLGNLAAADLFAGMAYLFLMF). The Extracellular portion of the chain corresponds to 88-104 (HTGPRTARLSIKGWFLR). A helical membrane pass occupies residues 105-124 (QGLLDTSLTASVATLLAIAV). Residues 125–144 (ERHRSVMAVQLHSRLPRGRV) lie on the Cytoplasmic side of the membrane. A helical membrane pass occupies residues 145 to 165 (VTLIVGVWAAALGLGLLPAHF). At 166 to 185 (WHCLCDLDSCSRMVPLFSRS) the chain is on the extracellular side. The helical transmembrane segment at 186–206 (YLAAWALSSLLVFLLMVAVYT) threads the bilayer. At 207–239 (RIFFYVRRRVERMAEHVSCHPRYRETTLSLVKT) the chain is on the cytoplasmic side. Residues 240 to 260 (VVIILGAFVVCWTPGQVVLLL) traverse the membrane as a helical segment. The Extracellular portion of the chain corresponds to 261-270 (DGLDCKSCNV). Residues 271–291 (LAVEKYFLLLAEANSLVNAVV) traverse the membrane as a helical segment. Over 292–348 (YSCRDAEMRRTFRRLLCCMCLRWSSHKSARYSASAQTGASTRIMLPENGRPLMDSTL) the chain is Cytoplasmic. A lipid anchor (S-palmitoyl cysteine) is attached at Cys-308. The PDZ-binding motif lies at 345-348 (DSTL).

The protein belongs to the G-protein coupled receptor 1 family. Interacts with SLC9A3R2/NHERF2, MAGI3 and PLCB3. Interacts with RALA and GRK2. As to expression, most abundantly expressed in testes, kidney, and embryonic brain. Other organs also express the transcript, including heart, lung, spleen, thymus, stomach, and adult brain. Several have little or no expression, including liver, small intestine, and skeletal muscle.

It localises to the cell surface. It is found in the cell membrane. In terms of biological role, receptor for lysophosphatidic acid (LPA), a mediator of diverse cellular activities. Seems to be coupled to the G(i)/G(o), G(12)/G(13), and G(q) families of heteromeric G proteins. Plays a key role in phospholipase C-beta (PLC-beta) signaling pathway Stimulates phospholipase C (PLC) activity in a manner that is independent of RALA activation. This Mus musculus (Mouse) protein is Lysophosphatidic acid receptor 2.